A 469-amino-acid chain; its full sequence is 3-isopropylmalate dehydratase large subunit (469 aa).

Residues Cys-349, Cys-410, and Cys-413 each coordinate [4Fe-4S] cluster.

It belongs to the aconitase/IPM isomerase family. LeuC type 1 subfamily. In terms of assembly, heterodimer of LeuC and LeuD. [4Fe-4S] cluster is required as a cofactor.

The enzyme catalyses (2R,3S)-3-isopropylmalate = (2S)-2-isopropylmalate. Its pathway is amino-acid biosynthesis; L-leucine biosynthesis; L-leucine from 3-methyl-2-oxobutanoate: step 2/4. Catalyzes the isomerization between 2-isopropylmalate and 3-isopropylmalate, via the formation of 2-isopropylmaleate. The polypeptide is 3-isopropylmalate dehydratase large subunit (Neisseria meningitidis serogroup A / serotype 4A (strain DSM 15465 / Z2491)).